The primary structure comprises 160 residues: pH-gated potassium channel KcsA (160 aa).

Residues 1–27 (MPPMLSGLLARLVKLLLGRHGSALHWR) are Cytoplasmic-facing. The chain crosses the membrane as a helical span at residues 28–50 (AAGAATVLLVIVLLAGSYLAVLA). Residues 51–61 (ERGAPGAQLIT) are Extracellular-facing. The helical; Pore-forming intramembrane region spans 62 to 72 (YPRALWWSVET). Positions 73–80 (ATTVGYGD) form an intramembrane region, pore-forming. The short motif at 75-80 (TVGYGD) is the Selectivity filter element. Residues 81-87 (LYPVTLW) are Extracellular-facing. A helical transmembrane segment spans residues 88-111 (GRLVAVVVMVAGITSFGLVTAALA). Over 112–160 (TWFVGREQERRGHFVRHSEKAAEEAYTRTTRALHERFDRLERMLDDNRR) the chain is Cytoplasmic.

It belongs to the potassium channel family. In terms of assembly, homotetramer.

The protein resides in the cell membrane. Its function is as follows. Acts as a pH-gated potassium ion channel; changing the cytosolic pH from 7 to 4 opens the channel. This chain is pH-gated potassium channel KcsA (kcsA), found in Streptomyces coelicolor (strain ATCC BAA-471 / A3(2) / M145).